The sequence spans 472 residues: Replicative helicase loading/DNA remodeling protein DnaB (472 aa).

The interval 1 to 112 (MADYWKDVLP…ERLFIYELLP (112 aa)) is DDBH1. Residues 210–302 (DLFLAGLSET…VHLREGEQPA (93 aa)) form a DDBH2-1 region. Residues 303–411 (EEDSLDGKLI…RQYLEWAEGK (109 aa)) are DDBH2-2. Residues 415–472 (SKRNQKVIREEKLPDWMTEKETASDSESGQQKLHPQDLEEQKKKMMEEMQKLKKYSAY) form a disordered region. Composition is skewed to basic and acidic residues over residues 421-437 (VIRE…KETA) and 448-465 (HPQD…EMQK).

Belongs to the DnaB/DnaD family. Homotetramer. Also forms higher-order oligomers, can be induced by some ssDNA. The DNA replisome assembles sequentially on oriC in this order; DnaA, DnaD, DnaB, DnaI-DnaC helicase. In atomic force microscopy forms a square with a small central hole. Part of the replication restart primosome which assembles in this order; PriA, DnaD then DnaB. The preferred DNA substrate mimics an arrested DNA replication fork with unreplicated lagging strand. Interacts with DnaC, but probably not as a tetramer. Interacts with DnaD but no interaction with PriA was seen. Interacts with cell cycle regulator CcrZ. Post-translationally, in early growth phase only full-length protein is detected, during late growth and stationary phase full-length and C-terminally truncated proteins are seen (at protein level). Truncated protein is only seen in cytoplasmic fractions.

The protein localises to the cytoplasm. It localises to the cell membrane. Its function is as follows. Helps DnaI load the DnaC replicative helicase onto single-stranded (ss)DNA. During DNA replication from the origin of replication (oriC) in the DNA replisome, DnaD is required after DnaA, before DnaB and before subsequent helicase DnaC loading. Component of the replication restart primosome, which reloads the replicative helicase on sites other than oriC. DnaB, DnaD and DnaI may also be required for a PriA-independent pathway of replication fork restart. DnaB and DnaD work together to allow DnaB access to ssDNA. DNA replication at oriC might originate on the inner face of the cell membrane; DnaB is essential for both replication initiation and cell membrane attachment of the origin region of the chromosome and plasmids. Weakly binds ssDNA, preferentially binds double-stranded (ds)DNA, and replication fork-like substrates. Remodels DNA, laterally compacts supercoiled plasmid and linear DNA, forms beads along the dsDNA. Together DnaB and DnaD form bipolar complexes on plasmid DNA. DnaB and DnaD are also required to load helicase on the repN plasmid origin of replication (oriN). This Bacillus subtilis (strain 168) protein is Replicative helicase loading/DNA remodeling protein DnaB.